Consider the following 124-residue polypeptide: Small ribosomal subunit protein uS12 (124 aa).

Asp-89 carries the post-translational modification 3-methylthioaspartic acid.

This sequence belongs to the universal ribosomal protein uS12 family. Part of the 30S ribosomal subunit. Contacts proteins S8 and S17. May interact with IF1 in the 30S initiation complex.

Its function is as follows. With S4 and S5 plays an important role in translational accuracy. Interacts with and stabilizes bases of the 16S rRNA that are involved in tRNA selection in the A site and with the mRNA backbone. Located at the interface of the 30S and 50S subunits, it traverses the body of the 30S subunit contacting proteins on the other side and probably holding the rRNA structure together. The combined cluster of proteins S8, S12 and S17 appears to hold together the shoulder and platform of the 30S subunit. In Shewanella putrefaciens (strain CN-32 / ATCC BAA-453), this protein is Small ribosomal subunit protein uS12.